The chain runs to 298 residues: Mitochondrial substrate carrier family protein N (298 aa).

Over 1–13 (MAGDLTPSLFLKY) the chain is Mitochondrial intermembrane. 3 Solcar repeats span residues 8–92 (SLFL…FKKT), 104–188 (FRIP…TAEN), and 207–290 (QKLS…IKQM). Residues 14 to 34 (GFGGALSCSITHSLVVPLDVV) traverse the membrane as a helical segment. The Mitochondrial matrix segment spans residues 35-60 (KTLLQTNPGKYTGMMNGFSTVIKEQG). A helical membrane pass occupies residues 61–81 (PSGLLQGLGPTAVGYALQGFL). The Mitochondrial intermembrane portion of the chain corresponds to 82–105 (KFGFYEVFKKTYADAVGEKADQFR). A helical transmembrane segment spans residues 106 to 126 (IPIWLAASATAEVIADIALCP). Over 127–162 (NEAVRIRLVAEPTFAKSPVEAFGKIFKQEGVLGFYK) the chain is Mitochondrial matrix. The helical transmembrane segment at 163 to 179 (GLPPILLKQVPYTMAKF) threads the bilayer. Topologically, residues 180–208 (AVFEFTAENVYKGLAASGKPKESLTDGQK) are mitochondrial intermembrane. Residues 209–229 (LSVSLGSGIVAGIVAAIVSQP) form a helical membrane-spanning segment. Over 230–262 (ADTILSKINQEKTDGGVVKAIGNIMRRLGVRGL) the chain is Mitochondrial matrix. Residues 263–283 (FLGLPTRCFMVGTLTAGQFFI) traverse the membrane as a helical segment. Residues 284–298 (YDGIKQMLGLTPAKK) lie on the Mitochondrial intermembrane side of the membrane.

It belongs to the mitochondrial carrier (TC 2.A.29) family.

The protein resides in the mitochondrion inner membrane. In terms of biological role, mitochondrial solute carriers shuttle metabolites, nucleotides, and cofactors through the mitochondrial inner membrane. Transports phosphate groups from the cytosol to the mitochondrial matrix. Phosphate is cotransported with H(+). This Dictyostelium discoideum (Social amoeba) protein is Mitochondrial substrate carrier family protein N (mcfN).